The chain runs to 160 residues: SsrA-binding protein (160 aa).

This sequence belongs to the SmpB family.

It localises to the cytoplasm. Functionally, required for rescue of stalled ribosomes mediated by trans-translation. Binds to transfer-messenger RNA (tmRNA), required for stable association of tmRNA with ribosomes. tmRNA and SmpB together mimic tRNA shape, replacing the anticodon stem-loop with SmpB. tmRNA is encoded by the ssrA gene; the 2 termini fold to resemble tRNA(Ala) and it encodes a 'tag peptide', a short internal open reading frame. During trans-translation Ala-aminoacylated tmRNA acts like a tRNA, entering the A-site of stalled ribosomes, displacing the stalled mRNA. The ribosome then switches to translate the ORF on the tmRNA; the nascent peptide is terminated with the 'tag peptide' encoded by the tmRNA and targeted for degradation. The ribosome is freed to recommence translation, which seems to be the essential function of trans-translation. The sequence is that of SsrA-binding protein from Haemophilus ducreyi (strain 35000HP / ATCC 700724).